A 232-amino-acid chain; its full sequence is Large ribosomal subunit protein uL1 (232 aa).

Belongs to the universal ribosomal protein uL1 family. As to quaternary structure, part of the 50S ribosomal subunit.

In terms of biological role, binds directly to 23S rRNA. The L1 stalk is quite mobile in the ribosome, and is involved in E site tRNA release. Functionally, protein L1 is also a translational repressor protein, it controls the translation of the L11 operon by binding to its mRNA. In Syntrophus aciditrophicus (strain SB), this protein is Large ribosomal subunit protein uL1.